Consider the following 325-residue polypeptide: Aspartate carbamoyltransferase catalytic subunit (325 aa).

Carbamoyl phosphate contacts are provided by arginine 64 and threonine 65. Lysine 92 contributes to the L-aspartate binding site. Carbamoyl phosphate contacts are provided by arginine 114, histidine 142, and glutamine 145. The L-aspartate site is built by arginine 176 and arginine 230. Positions 271 and 272 each coordinate carbamoyl phosphate.

This sequence belongs to the aspartate/ornithine carbamoyltransferase superfamily. ATCase family. Heterododecamer (2C3:3R2) of six catalytic PyrB chains organized as two trimers (C3), and six regulatory PyrI chains organized as three dimers (R2).

The enzyme catalyses carbamoyl phosphate + L-aspartate = N-carbamoyl-L-aspartate + phosphate + H(+). The protein operates within pyrimidine metabolism; UMP biosynthesis via de novo pathway; (S)-dihydroorotate from bicarbonate: step 2/3. Catalyzes the condensation of carbamoyl phosphate and aspartate to form carbamoyl aspartate and inorganic phosphate, the committed step in the de novo pyrimidine nucleotide biosynthesis pathway. In Nitratidesulfovibrio vulgaris (strain DSM 19637 / Miyazaki F) (Desulfovibrio vulgaris), this protein is Aspartate carbamoyltransferase catalytic subunit.